A 338-amino-acid polypeptide reads, in one-letter code: Secretory carrier-associated membrane protein 1 (338 aa).

The segment at 1–64 (MSDFDSNPFA…NVPNTQPAIM (64 aa)) is disordered. S2 carries the N-acetylserine modification. Phosphoserine is present on S2. Residues 2–155 (SDFDSNPFAD…QKTVKLMYYL (154 aa)) lie on the Cytoplasmic side of the membrane. The residue at position 45 (T45) is a Phosphothreonine. The helical transmembrane segment at 156-176 (WMFHAVTLFLNIFGCLAWFCV) threads the bilayer. The Lumenal segment spans residues 177–181 (DSSRA). The chain crosses the membrane as a helical span at residues 182-202 (VDFGLSILWFLLFTPCSFVCW). The Cytoplasmic segment spans residues 203–218 (YRPLYGAFRSDSSFRF). Residues 219–239 (FVFFFVYICQFAVHVLQAAGF) traverse the membrane as a helical segment. Over 240-261 (HNWGNCGWISSLTGLNKNIPVG) the chain is Lumenal. Residues 262–282 (IMMIIIAALFTASAVISLVMF) form a helical membrane-spanning segment. The Cytoplasmic portion of the chain corresponds to 283 to 338 (KKVHGLYRTTGASFEKAQQEFATGVMSNKTVQTAAANAASTAATSAAQNAFKGNQM).

It belongs to the SCAMP family. As to quaternary structure, interacts with SYNRG, ITSN1 and SLC9A7.

Its subcellular location is the golgi apparatus. It localises to the trans-Golgi network membrane. The protein resides in the recycling endosome membrane. In terms of biological role, functions in post-Golgi recycling pathways. Acts as a recycling carrier to the cell surface. In Mus musculus (Mouse), this protein is Secretory carrier-associated membrane protein 1 (Scamp1).